The sequence spans 515 residues: Bifunctional purine biosynthesis protein PurH (515 aa).

Residues 1–145 (MTKRALISVS…KNHASVTVVV (145 aa)) form the MGS-like domain.

This sequence belongs to the PurH family.

The catalysed reaction is (6R)-10-formyltetrahydrofolate + 5-amino-1-(5-phospho-beta-D-ribosyl)imidazole-4-carboxamide = 5-formamido-1-(5-phospho-D-ribosyl)imidazole-4-carboxamide + (6S)-5,6,7,8-tetrahydrofolate. It catalyses the reaction IMP + H2O = 5-formamido-1-(5-phospho-D-ribosyl)imidazole-4-carboxamide. The protein operates within purine metabolism; IMP biosynthesis via de novo pathway; 5-formamido-1-(5-phospho-D-ribosyl)imidazole-4-carboxamide from 5-amino-1-(5-phospho-D-ribosyl)imidazole-4-carboxamide (10-formyl THF route): step 1/1. Its pathway is purine metabolism; IMP biosynthesis via de novo pathway; IMP from 5-formamido-1-(5-phospho-D-ribosyl)imidazole-4-carboxamide: step 1/1. This chain is Bifunctional purine biosynthesis protein PurH, found in Streptococcus mutans serotype c (strain ATCC 700610 / UA159).